The primary structure comprises 182 residues: Small ribosomal subunit protein uS4c (182 aa).

The 62-residue stretch at 82–143 (MRLDNILFRL…KERSKVLIQN (62 aa)) folds into the S4 RNA-binding domain.

The protein belongs to the universal ribosomal protein uS4 family. As to quaternary structure, part of the 30S ribosomal subunit. Contacts protein S5. The interaction surface between S4 and S5 is involved in control of translational fidelity.

The protein localises to the plastid. It localises to the chloroplast. One of the primary rRNA binding proteins, it binds directly to 16S rRNA where it nucleates assembly of the body of the 30S subunit. Its function is as follows. With S5 and S12 plays an important role in translational accuracy. In Alophia veracruzana (Mexican pine woods lily), this protein is Small ribosomal subunit protein uS4c (rps4).